A 374-amino-acid chain; its full sequence is Peptide chain release factor 2 (374 aa).

The residue at position 250 (Gln-250) is an N5-methylglutamine.

It belongs to the prokaryotic/mitochondrial release factor family. Post-translationally, methylated by PrmC. Methylation increases the termination efficiency of RF2.

It localises to the cytoplasm. In terms of biological role, peptide chain release factor 2 directs the termination of translation in response to the peptide chain termination codons UGA and UAA. The polypeptide is Peptide chain release factor 2 (Beutenbergia cavernae (strain ATCC BAA-8 / DSM 12333 / CCUG 43141 / JCM 11478 / NBRC 16432 / NCIMB 13614 / HKI 0122)).